We begin with the raw amino-acid sequence, 207 residues long: Probable GTP-binding protein EngB (207 aa).

An EngB-type G domain is found at 24–199 (GGYEVAFAGR…RGIVGGWLGL (176 aa)). Residues 32 to 39 (GRSNAGKS), 59 to 63 (GRTQQ), 77 to 80 (DLPG), 144 to 147 (TKAD), and 178 to 180 (YSG) contribute to the GTP site. Residues S39 and T61 each coordinate Mg(2+).

It belongs to the TRAFAC class TrmE-Era-EngA-EngB-Septin-like GTPase superfamily. EngB GTPase family. It depends on Mg(2+) as a cofactor.

Its function is as follows. Necessary for normal cell division and for the maintenance of normal septation. The sequence is that of Probable GTP-binding protein EngB from Xanthomonas campestris pv. campestris (strain 8004).